The primary structure comprises 86 residues: Small ribosomal subunit protein bS16 (86 aa).

This sequence belongs to the bacterial ribosomal protein bS16 family.

The polypeptide is Small ribosomal subunit protein bS16 (Borreliella burgdorferi (strain ATCC 35210 / DSM 4680 / CIP 102532 / B31) (Borrelia burgdorferi)).